The following is a 375-amino-acid chain: Chaperone protein DnaJ (375 aa).

The J domain occupies 5–70 (DYYEVLGVAR…NKRRAYDAHG (66 aa)). Residues 131 to 208 (GIERRIEIPT…CHGAGRVEED (78 aa)) form a CR-type zinc finger. The Zn(2+) site is built by Cys144, Cys147, Cys160, Cys163, Cys182, Cys185, Cys196, and Cys199. 4 CXXCXGXG motif repeats span residues 144–151 (CAPCHGSG), 160–167 (CGTCHGRG), 182–189 (CPHCDGRG), and 196–203 (CKTCHGAG).

It belongs to the DnaJ family. In terms of assembly, homodimer. Zn(2+) serves as cofactor.

The protein localises to the cytoplasm. Functionally, participates actively in the response to hyperosmotic and heat shock by preventing the aggregation of stress-denatured proteins and by disaggregating proteins, also in an autonomous, DnaK-independent fashion. Unfolded proteins bind initially to DnaJ; upon interaction with the DnaJ-bound protein, DnaK hydrolyzes its bound ATP, resulting in the formation of a stable complex. GrpE releases ADP from DnaK; ATP binding to DnaK triggers the release of the substrate protein, thus completing the reaction cycle. Several rounds of ATP-dependent interactions between DnaJ, DnaK and GrpE are required for fully efficient folding. Also involved, together with DnaK and GrpE, in the DNA replication of plasmids through activation of initiation proteins. This Xanthomonas euvesicatoria pv. vesicatoria (strain 85-10) (Xanthomonas campestris pv. vesicatoria) protein is Chaperone protein DnaJ.